The chain runs to 336 residues: MYYPFVRKALFQLDPERAHEVTFQQLRRVTGTPLEMLVRQKVPARPVTCMGLTFKNPLGLAAGLDKNGECIDALGAMGFGSIEIGTVTPRPQPGNDKPRIFRLVDAEGLINRMGFNNHGVDNLVENVKKAHFDGVLGINIGKNKDTPVEHGKDDYLICMEKVYPYAGYIAINISSPNTPGLRTLQYGEALDDLLSGIKNKQLELQQKHQKYVPVAVKIAPDLLPEELIQVADSLVRHNIDGVIATNTTLDRSLVQGMKHCDETGGLSGRPLQLKSTEIIRMLSAELNGRLPIIGVGGIDSVIAAREKIAAGASLVQIYSGFIFKGPPLIKEIVTHI.

Residues 62-66 and Thr-86 each bind FMN; that span reads AGLDK. Lys-66 contacts substrate. A substrate-binding site is contributed by 111-115; that stretch reads NRMGF. The FMN site is built by Asn-139 and Asn-172. Position 172 (Asn-172) interacts with substrate. Ser-175 functions as the Nucleophile in the catalytic mechanism. Asn-177 contacts substrate. FMN is bound by residues Lys-217 and Thr-245. 246–247 provides a ligand contact to substrate; sequence NT. FMN contacts are provided by residues Gly-268, Gly-297, and 318-319; that span reads YS.

This sequence belongs to the dihydroorotate dehydrogenase family. Type 2 subfamily. As to quaternary structure, monomer. It depends on FMN as a cofactor.

It localises to the cell membrane. It carries out the reaction (S)-dihydroorotate + a quinone = orotate + a quinol. Its pathway is pyrimidine metabolism; UMP biosynthesis via de novo pathway; orotate from (S)-dihydroorotate (quinone route): step 1/1. Its function is as follows. Catalyzes the conversion of dihydroorotate to orotate with quinone as electron acceptor. This chain is Dihydroorotate dehydrogenase (quinone), found in Klebsiella pneumoniae (strain 342).